The chain runs to 775 residues: Ubiquitin carboxyl-terminal hydrolase 14 (775 aa).

The UBP-type 1; degenerate zinc finger occupies 1-108; it reads MSCPHLTETN…EDLYDYFYVP (108 aa). Cys25, Cys28, Cys41, Cys44, Cys49, His56, His60, His66, Cys153, His155, Cys174, Cys177, Cys186, Cys189, Cys194, His207, His211, His217, Cys236, and Cys239 together coordinate Zn(2+). Residues 151 to 259 form a UBP-type 2 zinc finger; sequence TTCDHIINLP…THMLNFGIDI (109 aa). One can recognise a USP domain in the interval 300–774; sequence TGLKNLGNSC…TGYVYLFERL (475 aa). Cys309 serves as the catalytic Nucleophile. Phosphoserine is present on Ser456. 2 UBA domains span residues 576–617 and 639–679; these read EWNQ…LFEH and SVSE…ILNH. Residue His730 is the Proton acceptor of the active site.

It belongs to the peptidase C19 family.

The catalysed reaction is Thiol-dependent hydrolysis of ester, thioester, amide, peptide and isopeptide bonds formed by the C-terminal Gly of ubiquitin (a 76-residue protein attached to proteins as an intracellular targeting signal).. The sequence is that of Ubiquitin carboxyl-terminal hydrolase 14 (ubp14) from Schizosaccharomyces pombe (strain 972 / ATCC 24843) (Fission yeast).